A 366-amino-acid chain; its full sequence is Methyltransferase phm5 (366 aa).

S-adenosyl-L-methionine is bound by residues 204–205, Asp-230, 255–256, Arg-273, and Arg-274; these read GG and SM.

This sequence belongs to the class I-like SAM-binding methyltransferase superfamily. Cation-independent O-methyltransferase family.

Its pathway is secondary metabolite biosynthesis. Functionally, methyltransferase; part of the gene cluster that mediates the biosynthesis of the trans-fused decalin-containing tetramic acid phomasetin, the stereochemical opposite of the HIV-1 integrase inhibitor equisetin. The PKS module of phm1 together with the enoylreductase phm4 catalyze the formation of the polyketide unit which is then conjugated to L-serine by the condensation domain of the phm1 NRPS module. Activity of the Dieckmann cyclase domain (RED) of phm1 results in release of the Dieckmann product intermediate. The Diels-Alderase phm7 then uses the Dieckmann product of phm1 as substrate and catalyzes the Diels-Alder cycloaddition to form the decalin ring of N-desmethylphomasetin. N-desmethylphomasetin is further methylated to phomasetin by the methyltransferase phm5. This Pyrenochaetopsis sp protein is Methyltransferase phm5.